Reading from the N-terminus, the 547-residue chain is MFS-type transporter ltbE (547 aa).

Residues 1–23 are disordered; the sequence is MEIAAETTGPAGVTTDVTNAEES. 13 helical membrane-spanning segments follow: residues 33–53, 74–94, 104–124, 135–155, 165–185, 195–215, 240–260, 267–287, 310–330, 343–363, 370–390, 399–419, and 432–452; these read QGWA…VLAI, DIGW…PTCG, WVYC…AVAP, ISGL…SYCV, PIVL…GGSI, FIFW…WFTL, ATLL…GGIV, KVFG…CLQW, GFMM…PIYF, INLL…GSLA, VPFM…YQLV, WIGF…MPIL, and TGLV…PSVG. Asn-463 carries N-linked (GlcNAc...) asparagine glycosylation. A helical transmembrane segment spans residues 506–526; sequence VFWVGVATPALAWIASWAMEW.

This sequence belongs to the major facilitator superfamily. TCR/Tet family.

The protein resides in the cell membrane. In terms of biological role, MFS-type transporter; part of the gene cluster that mediates the biosynthesis of luteodienoside A, a glycosylated polyketide consisting of an unusual 1-O-beta-D-glucopyranosyl-myo-inositol (glucinol) ester of 3-hydroxy-2,2,4-trimethylocta-4,6-dienoic acid. LtbE is probably involved in the secretion of luteodienoside A. This is MFS-type transporter ltbE from Aspergillus luteorubrus.